The chain runs to 112 residues: Elongin-C (112 aa).

Belongs to the SKP1 family. In terms of assembly, heterotrimer of an A (ELOA, ELOA2 or ELOA3P), ELOB and ELOC subunit. The elongin BC complex interacts with EPOP; leading to recruit the elongin BC complex to Polycomb group (PcG) target genes, thereby restricting excessive activity of the PRC2/EED-EZH2 complex. Component of multiple cullin-RING E3 ubiquitin-protein ligase complexes composed of Elongin BC (ELOB and ELOC), a cullin (CUL2 or CUL5), a catalytic subunit (RBX1 or RNF7/RBX2), as well as a substrate adapter protein that can be either ASB2, ASB9, ASB11, KLHDC2, KLHDC3, KLHDC10, APPBP2, FEM1A, FEM1B, FEM1C, LRR1, PCMTD1, SOCS1, SOCS2, SOCS5, SPSB1, SPSB3, ELOA, VHL, WSB1, ZYG11B or RAB40C. Interacts with TMF1. As part of the Elongin BC E3 ubiquitin ligase complex; interacts with NRBP1. May form oligomers as a KLHDC2/KLHDC3-ELOB-ELOC complex; this interaction is autoinhibitory for the E3 ligase complex as the substrate-binding site of KLHDC2/KLHDC3 is blocked in the oligomer. Ubiquitinated by the DCX(AMBRA1) complex, leading to its degradation by the proteasome.

The protein localises to the nucleus. The protein operates within protein modification; protein ubiquitination. SIII, also known as elongin, is a general transcription elongation factor that increases the RNA polymerase II transcription elongation past template-encoded arresting sites. Subunit A is transcriptionally active and its transcription activity is strongly enhanced by binding to the dimeric complex of the SIII regulatory subunits B and C (elongin BC complex). In embryonic stem cells, the elongin BC complex is recruited by EPOP to Polycomb group (PcG) target genes in order generate genomic region that display both active and repressive chromatin properties, an important feature of pluripotent stem cells. In terms of biological role, core component of multiple cullin-RING-based ECS (ElonginB/C-CUL2/5-SOCS-box protein) E3 ubiquitin-protein ligase complexes, which mediate the ubiquitination of target proteins. By binding to BC-box motifs it seems to link target recruitment subunits, like VHL and members of the SOCS box family, to Cullin/RBX1 modules that activate E2 ubiquitination enzymes. Component the von Hippel-Lindau ubiquitination complex CBC(VHL). A number of ECS complexes (containing either KLHDC2, KLHDC3, KLHDC10, APPBP2, FEM1A, FEM1B or FEM1C as substrate-recognition component) are part of the DesCEND (destruction via C-end degrons) pathway, which recognizes a C-degron located at the extreme C terminus of target proteins, leading to their ubiquitination and degradation. The ECS(ASB9) complex mediates ubiquitination and degradation of CKB. As part of a multisubunit ubiquitin ligase complex, polyubiquitinates monoubiquitinated POLR2A. ECS(LRR1) ubiquitinates MCM7 and promotes CMG replisome disassembly by VCP and chromatin extraction during S-phase. As part of the ECS(RAB40C) complex, mediates ANKRD28 ubiquitination and degradation, thereby inhibiting protein phosphatase 6 (PP6) complex activity and focal adhesion assembly during cell migration. This is Elongin-C (ELOC) from Bos taurus (Bovine).